A 159-amino-acid chain; its full sequence is Protransforming growth factor alpha (159 aa).

The N-terminal stretch at 1–23 is a signal peptide; the sequence is MVPAAGQLALLALGILVAVCQAL. A propeptide spans 24–38 (removed in mature form); sequence ENSTSPLSDSPVAAA. Residues 24–97 lie on the Extracellular side of the membrane; it reads ENSTSPLSDS…AVVAASQKKQ (74 aa). N25 carries an N-linked (GlcNAc...) asparagine glycan. The EGF-like domain occupies 42 to 82; that stretch reads HFNKCPDSHTQYCFHGTCRFLVQEEKPACVCHSGYVGVRCE. Cystine bridges form between C46/C59, C54/C70, and C72/C81. A propeptide spans 89 to 159 (removed in mature form); that stretch reads VVAASQKKQA…TACCHSETVV (71 aa). The helical transmembrane segment at 98 to 123 threads the bilayer; it reads AITALVVVSIVALAVLIITCVLIHCC. Topologically, residues 124-159 are cytoplasmic; the sequence is QVRKHCEWCRALVCRHEKPSALLKGRTACCHSETVV. S-palmitoyl cysteine attachment occurs at residues C152 and C153.

Interacts with the PDZ domains of MAGI3, SDCBP and SNTA1. The interaction with SDCBP, is required for the targeting to the cell surface. In the endoplasmic reticulum, in its immature form (i.e. with a prosegment and lacking full N-glycosylation), interacts with CNIH. In the Golgi apparatus, may form a complex with CNIH and GORASP2. Interacts (via cytoplasmic C-terminal domain) with NKD2.

It localises to the secreted. Its subcellular location is the extracellular space. The protein localises to the cell membrane. Functionally, TGF alpha is a mitogenic polypeptide that is able to bind to the EGF receptor/EGFR and to act synergistically with TGF beta to promote anchorage-independent cell proliferation in soft agar. In Rattus norvegicus (Rat), this protein is Protransforming growth factor alpha (Tgfa).